The sequence spans 844 residues: Translation initiation factor IF-2 (844 aa).

The span at 1 to 11 (MTEDVKADAPK) shows a compositional bias: basic and acidic residues. Disordered regions lie at residues 1–48 (MTED…VKTD) and 79–249 (RLEA…GTAL). Low complexity predominate over residues 21–30 (TTVSSTTTGG). The span at 79–161 (RLEAEKAATK…AAEEAKRYAE (83 aa)) shows a compositional bias: basic and acidic residues. The segment covering 162–175 (ADDSDNESSSEDYS) has biased composition (acidic residues). Basic residues predominate over residues 200–210 (RGKNKVAKAKK). Basic and acidic residues predominate over residues 211–237 (GGRDDENSKNSKNERESNRKNQKDAKF). One can recognise a tr-type G domain in the interval 343–513 (TRAPVVTIMG…LLQSEVLELT (171 aa)). The G1 stretch occupies residues 352–359 (GHVDHGKT). 352–359 (GHVDHGKT) lines the GTP pocket. The tract at residues 377–381 (GITQH) is G2. A G3 region spans residues 399 to 402 (DTPG). Residues 399–403 (DTPGH) and 453–456 (NKID) contribute to the GTP site. Positions 453 to 456 (NKID) are G4. The interval 489–491 (SAK) is G5.

The protein belongs to the TRAFAC class translation factor GTPase superfamily. Classic translation factor GTPase family. IF-2 subfamily.

It localises to the cytoplasm. Functionally, one of the essential components for the initiation of protein synthesis. Protects formylmethionyl-tRNA from spontaneous hydrolysis and promotes its binding to the 30S ribosomal subunits. Also involved in the hydrolysis of GTP during the formation of the 70S ribosomal complex. This chain is Translation initiation factor IF-2, found in Haemophilus influenzae (strain 86-028NP).